The primary structure comprises 268 residues: tRNA pseudouridine synthase A (268 aa).

Residue D52 is the Nucleophile of the active site. Position 110 (Y110) interacts with substrate.

It belongs to the tRNA pseudouridine synthase TruA family. As to quaternary structure, homodimer.

The enzyme catalyses uridine(38/39/40) in tRNA = pseudouridine(38/39/40) in tRNA. Its function is as follows. Formation of pseudouridine at positions 38, 39 and 40 in the anticodon stem and loop of transfer RNAs. The chain is tRNA pseudouridine synthase A from Prochlorococcus marinus (strain MIT 9301).